The sequence spans 1556 residues: Bromodomain adjacent to zinc finger domain protein 1A (1556 aa).

Residues 1 to 128 (MPLLHRKPFV…EETVEVIRNN (128 aa)) are required for interaction with the CHRAC1-POLE3 heterodimer. Required for interaction with the CHRAC1-POLE3 heterodimer. Positions 1–133 (MPLLHRKPFV…VIRNNGARLQ (133 aa)) are required for interaction with NCOR1. Positions 22 to 128 (EEVFYCKVTN…EETVEVIRNN (107 aa)) constitute a WAC domain. The residue at position 270 (serine 270) is a Phosphoserine. The stretch at 306-397 (KERDKLLKQE…YVEYLKQWSK (92 aa)) forms a coiled coil. The DDT domain maps to 422–487 (PEIFGDALMV…LTAIFQAIAE (66 aa)). A coiled-coil region spans residues 634–709 (IEDYVDILRQ…DISIGEEERE (76 aa)). Residues 662–695 (EAAARIRKRKEEKLKEQEQKMKEKQEKLKEDEQR) show a composition bias toward basic and acidic residues. 3 disordered regions span residues 662-754 (EAAA…NGFK), 841-877 (PSSF…GPRD), and 941-966 (FHFS…AYDP). Residues 667–933 (IRKRKEEKLK…QEKSRICAQL (267 aa)) are required for interaction with SMARCA5 and formation of the CHRAC ISWI chromatin remodeling complex. Phosphoserine is present on serine 702. The segment covering 703–713 (IGEEEREDFDT) has biased composition (acidic residues). A compositionally biased stretch (basic and acidic residues) spans 715 to 726 (IESKDTEQKELD). The span at 727-736 (QDMVTEDEDD) shows a compositional bias: acidic residues. Phosphothreonine is present on threonine 731. Polar residues-rich tracts occupy residues 842–872 (SSFQ…SNID) and 951–965 (SKPT…NAYD). Lysine 952 participates in a covalent cross-link: Glycyl lysine isopeptide (Lys-Gly) (interchain with G-Cter in SUMO2). Serine 960 and serine 961 each carry phosphoserine. The PHD-type zinc finger occupies 1148-1198 (NARCKICRKKGDAENMVLCDGCDRGHHTYCVRPKLKTVPEGDWFCPECRPK). 2 disordered regions span residues 1202-1376 (RRLS…NFPN) and 1399-1431 (LQES…RQGG). Acidic residues predominate over residues 1213–1258 (ESDEDVEDSMGGEDDEVDGDEEEGQSEEEEYEVEQDEDDSQEEEEV). Residues 1262 to 1276 (KRGRPQVRLPVKTRG) are compositionally biased toward basic residues. Residues 1277–1312 (KLSSSFSSRGQQQEPGRYPSRSQQSTPKTTVSSKTG) are compositionally biased toward polar residues. Phosphoserine is present on residues serine 1281, serine 1320, serine 1339, serine 1353, serine 1363, serine 1371, serine 1402, serine 1413, and serine 1417. Over residues 1363 to 1374 (SANNTPENSPNF) the composition is skewed to polar residues. One can recognise a Bromo domain in the interval 1430–1533 (GGVHELSAFE…AFFHIQAQKL (104 aa)). Residue threonine 1547 is modified to Phosphothreonine.

Belongs to the WAL family. As to quaternary structure, component of the ACF-1 ISWI chromatin remodeling complex at least composed of SMARCA1 and BAZ1A, which regulates the spacing of histone octamers on the DNA template to facilitate access to DNA. Within the ACF-1 ISWI chromatin remodeling complex interacts with SMARCA1; the interaction is direct. Component of the ACF-5 ISWI chromatin remodeling complex (also called the ACF complex) at least composed of BAZ1A and SMARCA5/SNF2H, which regulates the spacing of histone octamers on the DNA template to facilitate access to DNA. Within the ACF-5 ISWI chromatin remodeling complex interacts with SMARCA5/SNF2H; the interaction is direct. Component of the CHRAC ISWI chromatin remodeling complex at least composed of SMARCA5/SNF2H, BAZ1A/ACF1, CHRAC1 and POLE3; the complex preferentially binds DNA through the CHRAC1-POLE3 heterodimer and possesses ATP-dependent nucleosome-remodeling activity. Within the complex interacts (via N-terminus) with POLE3-CHRAC1 heterodimer; the interaction is direct and is required for the complex to preferentially bind to DNA. Within the complex interacts with SMARCA5/SNF2H; the interaction is direct and promotes the interaction with the POLE3-CHRAC1 heterodimer. Interacts with NCOR1 (via its RD1 domain); the interaction corepresses a number of NCOR1-regulated genes. Highly expressed in testis and at low or undetectable levels in other tissues analyzed.

It is found in the nucleus. In terms of biological role, regulatory subunit of the ATP-dependent ACF-1 and ACF-5 ISWI chromatin remodeling complexes, which form ordered nucleosome arrays on chromatin and slide edge- and center-positioned histone octamers away from their original location on the DNA template to facilitate access to DNA during DNA-templated processes such as DNA replication, transcription, and repair. Both complexes regulate the spacing of nucleosomes along the chromatin and have the ability to slide mononucleosomes to the center of a DNA template in an ATP-dependent manner. The ACF-1 ISWI chromatin remodeling complex has a lower ATP hydrolysis rate than the ACF-5 ISWI chromatin remodeling complex. Has a role in sensing the length of DNA which flank nucleosomes, which modulates the nucleosome spacing activity of the ACF-5 ISWI chromatin remodeling complex. Involved in DNA replication and together with SMARCA5/SNF2H is required for replication of pericentric heterochromatin in S-phase. May have a role in nuclear receptor-mediated transcription repression. The protein is Bromodomain adjacent to zinc finger domain protein 1A (BAZ1A) of Homo sapiens (Human).